The sequence spans 327 residues: MDLFSSLPNELLYHILSFLSTKEAALTSVLSKRWRNLFAFVPYLEFDDSVFLHPEERKREKEGILQSFMDFVDRVLDLHGDSLIKTFSLKCKTGVDSDHVDRWICNVLARGVSDLDLFIDFRDLYSLPHEVGVSRTLVVLRVGSESDLYWWQKFLCLPMLKTLVLDSCWLCIGQFQILLLACPALEELDMTNTRWKDSNVTVSSSILKELTIDLHGCCSVVNLKSLSFDAPSLVYFYYCDSLAEDYPQVNLKNLVEAQINLLLTQAQIEQVRALNNEMLVADDVFPGLGNAWKLITGLRNVQQLYLSPDTLEVSFLSLVYFWLVGRI.

Positions 1 to 47 constitute an F-box domain; that stretch reads MDLFSSLPNELLYHILSFLSTKEAALTSVLSKRWRNLFAFVPYLEFD. LRR repeat units follow at residues 116–144, 161–192, 199–230, 235–261, and 277–308; these read DLFI…RVGS, KTLV…DMTN, NVTV…SFDA, YFYY…QINL, and EMLV…YLSP.

The protein is F-box/LRR-repeat protein At3g58900 of Arabidopsis thaliana (Mouse-ear cress).